The chain runs to 902 residues: Calcium-activated chloride channel regulator 3A-1 (902 aa).

Residues 1–21 (MVPGLQVLLFLTLHLLQNTES) form the signal peptide. Residues 45–199 (DERLIPSIKE…RITGTNVVHN (155 aa)) form a metalloprotease domain region. Residue N75 is glycosylated (N-linked (GlcNAc...) asparagine). H155 is a Zn(2+) binding site. Residue E156 is part of the active site. The Zn(2+) site is built by H159 and D166. In terms of domain architecture, VWFA spans 308–476 (VVCLVLDKSG…NSLIDAFSRI (169 aa)). N-linked (GlcNAc...) asparagine glycans are attached at residues N504, N515, N630, N687, N697, N809, and N814.

Belongs to the CLCR family. As to quaternary structure, part of a complex composed of complement component C3, CLCA1/CLCA3, A2ML1/OH and ALB/serum albumin. Glycosylated. In terms of processing, the 130-kDa product is autoproteolytically processed by the metalloprotease domain and yields two subunits, a 90-kDa protein and a group of 32- to 38-kDa proteins. The cleavage is necessary for calcium-activated chloride channel (CaCC) activation activity. As to expression, highly expressed in skin and spleen, and at lower levels in kidney and liver. Also detected in lung and brain. Not detected in lung or brain. In lung, localizes to respiratory epithelia of the bronchi and trachea and the submucosal glands.

The protein resides in the cell membrane. Plays a role in modulating chloride current across the plasma membrane in a calcium-dependent manner. In Mus musculus (Mouse), this protein is Calcium-activated chloride channel regulator 3A-1.